The chain runs to 328 residues: Pancreas transcription factor 1 subunit alpha (328 aa).

A bHLH domain is found at 163–215 (QLRQAANVRERRRMQSINDAFEGLRSHIPTLPYEKRLSKVDTLRLAIGYINFL). Disordered stretches follow at residues 259–278 (RGTR…PLAG) and 305–328 (DPRK…EFVS).

In terms of assembly, component of the pancreas transcription factor 1 complex (PTF1) which is composed of TCF3/p75, TCF12/p64 and PTF1A/p48. TCF3 is responsible for the nuclear import of the p48/p64 complex. Interacts with TCF3 and RBPSUH/RBP-Jkappa. In terms of tissue distribution, pancreas-specific (at protein level). Loss of expression is seen in ductal type pancreas cancers.

The protein resides in the nucleus. It is found in the cytoplasm. Transcription factor implicated in the cell fate determination in various organs. Binds to the E-box consensus sequence 5'-CANNTG-3'. Plays a role in early and late pancreas development and differentiation. Important for determining whether cells allocated to the pancreatic buds continue towards pancreatic organogenesis or revert back to duodenal fates. May be involved in the maintenance of exocrine pancreas-specific gene expression including ELA1 and amylase. Required for the formation of pancreatic acinar and ductal cells. Plays an important role in cerebellar development. Directly regulated by FOXN4 and RORC during retinal development, FOXN4-PTF1A pathway plays a central role in directing the differentiation of retinal progenitors towards horizontal and amacrine fates. The polypeptide is Pancreas transcription factor 1 subunit alpha (PTF1A) (Homo sapiens (Human)).